The following is a 436-amino-acid chain: Xylose isomerase (436 aa).

Mg(2+)-binding residues include Asp306 and Asp308.

Belongs to the xylose isomerase family. As to quaternary structure, homotetramer. The cofactor is Mg(2+).

The protein resides in the cytoplasm. The enzyme catalyses alpha-D-xylose = alpha-D-xylulofuranose. The polypeptide is Xylose isomerase (Rhizobium rhizogenes (strain K84 / ATCC BAA-868) (Agrobacterium radiobacter)).